A 502-amino-acid chain; its full sequence is Arabinose import ATP-binding protein AraG (502 aa).

ABC transporter domains lie at 5–240 (LEFS…MVGR) and 253–496 (LGGI…LPDK). 37 to 44 (GENGAGKS) is a binding site for ATP.

Belongs to the ABC transporter superfamily. Arabinose importer (TC 3.A.1.2.2) family. In terms of assembly, the complex is composed of two ATP-binding proteins (AraG), two transmembrane proteins (AraH) and a solute-binding protein (AraF).

The protein resides in the cell inner membrane. It carries out the reaction L-arabinose(out) + ATP + H2O = L-arabinose(in) + ADP + phosphate + H(+). Functionally, part of the ABC transporter complex AraFGH involved in arabinose import. Responsible for energy coupling to the transport system. This is Arabinose import ATP-binding protein AraG from Rhizobium johnstonii (strain DSM 114642 / LMG 32736 / 3841) (Rhizobium leguminosarum bv. viciae).